The primary structure comprises 123 residues: Large ribosomal subunit protein uL14c (123 aa).

This sequence belongs to the universal ribosomal protein uL14 family. Part of the 50S ribosomal subunit.

Its subcellular location is the plastid. The protein localises to the chloroplast. Binds to 23S rRNA. The polypeptide is Large ribosomal subunit protein uL14c (Lolium perenne (Perennial ryegrass)).